The sequence spans 324 residues: Homoserine kinase (324 aa).

Residue 100 to 110 participates in ATP binding; the sequence is PLSSGMGSSAA.

The protein belongs to the GHMP kinase family. Homoserine kinase subfamily.

The protein localises to the cytoplasm. The catalysed reaction is L-homoserine + ATP = O-phospho-L-homoserine + ADP + H(+). It participates in amino-acid biosynthesis; L-threonine biosynthesis; L-threonine from L-aspartate: step 4/5. Catalyzes the ATP-dependent phosphorylation of L-homoserine to L-homoserine phosphate. This Chlorobaculum tepidum (strain ATCC 49652 / DSM 12025 / NBRC 103806 / TLS) (Chlorobium tepidum) protein is Homoserine kinase.